Here is a 267-residue protein sequence, read N- to C-terminus: Glucosamine-6-phosphate deaminase (267 aa).

The Proton acceptor; for enolization step role is filled by Asp-71. Catalysis depends on Asp-140, which acts as the For ring-opening step. The Proton acceptor; for ring-opening step role is filled by His-142. Glu-147 (for ring-opening step) is an active-site residue.

Belongs to the glucosamine/galactosamine-6-phosphate isomerase family. As to quaternary structure, homohexamer.

It is found in the cytoplasm. The catalysed reaction is alpha-D-glucosamine 6-phosphate + H2O = beta-D-fructose 6-phosphate + NH4(+). Its pathway is nucleotide-sugar biosynthesis; UDP-N-acetyl-alpha-D-glucosamine biosynthesis; alpha-D-glucosamine 6-phosphate from D-fructose 6-phosphate: step 1/1. Its function is as follows. Catalyzes the reversible conversion of alpha-D-glucosamine 6-phosphate (GlcN-6P) into beta-D-fructose 6-phosphate (Fru-6P) and ammonium ion, a regulatory reaction step in de novo uridine diphosphate-N-acetyl-alpha-D-glucosamine (UDP-GlcNAc) biosynthesis via hexosamine pathway. This chain is Glucosamine-6-phosphate deaminase, found in Caenorhabditis elegans.